The primary structure comprises 108 residues: Peptidyl-prolyl cis-trans isomerase FKBP1B (108 aa).

A PPIase FKBP-type domain is found at 20–108; the sequence is GQTCVVHYTG…IFGVELLNLE (89 aa).

It belongs to the FKBP-type PPIase family. FKBP1 subfamily. Identified in a complex composed of RYR2, FKBP1B, PKA catalytic subunit, PRKAR2A, AKAP6, and the protein phosphatases PP2A and PP1. Interacts directly with RYR2.

It localises to the cytoplasm. Its subcellular location is the sarcoplasmic reticulum. The catalysed reaction is [protein]-peptidylproline (omega=180) = [protein]-peptidylproline (omega=0). With respect to regulation, inhibited by both FK506 and rapamycin. Functionally, has the potential to contribute to the immunosuppressive and toxic effects of FK506 and rapamycin. PPIases accelerate the folding of proteins. It catalyzes the cis-trans isomerization of proline imidic peptide bonds in oligopeptides. The sequence is that of Peptidyl-prolyl cis-trans isomerase FKBP1B (FKBP1B) from Oryctolagus cuniculus (Rabbit).